The following is a 66-amino-acid chain: Cold shock-like protein CspD (66 aa).

Residues 4–63 (GKVKWFNGEKGFGFIEVEGGEDVFVHFSAIQGDGFKTLEEGQEVSFEIVDGNRGPQAANV) enclose the CSD domain.

As to quaternary structure, homodimer.

The protein resides in the cytoplasm. In Bacillus cereus, this protein is Cold shock-like protein CspD (cspD).